The primary structure comprises 1845 residues: Helicase swr-1 (1845 aa).

Polar residues predominate over residues 1–13; sequence MTTMMTDSGTASD. Positions 1 to 329 are disordered; the sequence is MTTMMTDSGT…GASRATPRIK (329 aa). Over residues 24–38 the composition is skewed to low complexity; it reads NDTTTTTTTTTTPGD. Positions 63 to 84 are enriched in polar residues; the sequence is SKSYSSTHHVPAIDNTSTTNAN. Over residues 98 to 108 the composition is skewed to low complexity; it reads SPLSSISSPLS. Residues 168 to 180 show a composition bias toward basic and acidic residues; sequence PKPESPPWKKFEA. Residues 216 to 243 show a composition bias toward polar residues; sequence AIQTSPVSNKSSASTSRKPAPASSSNSK. Composition is skewed to pro residues over residues 248-258 and 283-292; these read KMPPPPPPPKA and PRRPATPPKP. An HSA domain is found at 418 to 493; it reads PEAEEEPPRQ…EMEASKAKWR (76 aa). Disordered regions lie at residues 539–713 and 749–935; these read QKLQ…LFFG and ELQV…TVKT. The segment covering 549–565 has biased composition (acidic residues); the sequence is DGDEITDEDEDEDDEDL. Positions 574–585 are enriched in basic and acidic residues; it reads GDEKESDEHSDQ. 2 stretches are compositionally biased toward acidic residues: residues 586–608 and 663–704; these read GSDE…SSED and NDDD…DDEP. Composition is skewed to polar residues over residues 762–777 and 815–834; these read TNGT…SQTE and TNDS…NQTL. Over residues 888-897 the composition is skewed to low complexity; that stretch reads SQSQTQSPKT. Over residues 898–909 the composition is skewed to basic and acidic residues; sequence TDTKPTDVDTPH. Polar residues predominate over residues 922–933; that stretch reads RQSSPQPTTPTV. Residues 957–1122 form the Helicase ATP-binding domain; that stretch reads AGLYANNTNG…WSLLYFLAPP (166 aa). Residue 970 to 977 participates in ATP binding; it reads DEMGLGKT. Residues 1073–1076 carry the DEAH box motif; sequence DEAH. One can recognise a Helicase C-terminal domain in the interval 1510–1660; sequence ALDKLLRKLQ…DVVIQEGEFT (151 aa). Disordered stretches follow at residues 1702–1724, 1751–1783, and 1816–1845; these read TTGA…PPVR, QDEA…GGEE, and LEGT…SRKR. Gly residues predominate over residues 1704 to 1718; it reads GAGGYDGTADGGGGA. The span at 1769-1781 shows a compositional bias: low complexity; the sequence is DGLADLDGQLLGG. A compositionally biased stretch (basic residues) spans 1826-1845; the sequence is DRKKGRDRNRNRKGKDSRKR.

This sequence belongs to the SNF2/RAD54 helicase family. SWR1 subfamily. Component of the SWR1 chromatin-remodeling complex.

It localises to the nucleus. It catalyses the reaction ATP + H2O = ADP + phosphate + H(+). Functionally, catalytic component of the SWR1 complex which mediates the ATP-dependent exchange of histone H2A for the H2A variant H2A.Z leading to transcriptional regulation of selected genes by chromatin remodeling. The protein is Helicase swr-1 (crf1-1) of Neurospora crassa (strain ATCC 24698 / 74-OR23-1A / CBS 708.71 / DSM 1257 / FGSC 987).